The chain runs to 400 residues: Na(+)/H(+) antiporter NhaA (400 aa).

11 helical membrane passes run 26–46 (AGGI…NSPL), 71–91 (LIHW…GMEV), 107–127 (IFPA…YWFI), 137–157 (GWAI…ALLS), 166–186 (IFLL…IALF), 189–209 (HGLS…LILL), 225–245 (AILW…GVII), 273–293 (FVIL…GIDV), 299–319 (PLLL…IFGF), 340–360 (IFAV…LASL), and 373–393 (LSRL…YLFL).

Belongs to the NhaA Na(+)/H(+) (TC 2.A.33) antiporter family.

It is found in the cell inner membrane. The enzyme catalyses Na(+)(in) + 2 H(+)(out) = Na(+)(out) + 2 H(+)(in). Its function is as follows. Na(+)/H(+) antiporter that extrudes sodium in exchange for external protons. The protein is Na(+)/H(+) antiporter NhaA of Haemophilus influenzae (strain ATCC 51907 / DSM 11121 / KW20 / Rd).